The sequence spans 395 residues: 8-amino-7-oxononanoate synthase (395 aa).

K24 provides a ligand contact to substrate. Pyridoxal 5'-phosphate is bound at residue 111–112; it reads GF. H136 contacts substrate. Residues S184, 209-212, and 240-243 contribute to the pyridoxal 5'-phosphate site; these read DDAH and TLSK. K243 is modified (N6-(pyridoxal phosphate)lysine). T357 is a substrate binding site.

The protein belongs to the class-II pyridoxal-phosphate-dependent aminotransferase family. BioF subfamily. Homodimer. Pyridoxal 5'-phosphate serves as cofactor.

The catalysed reaction is 6-carboxyhexanoyl-[ACP] + L-alanine + H(+) = (8S)-8-amino-7-oxononanoate + holo-[ACP] + CO2. The protein operates within cofactor biosynthesis; biotin biosynthesis. Functionally, catalyzes the decarboxylative condensation of pimeloyl-[acyl-carrier protein] and L-alanine to produce 8-amino-7-oxononanoate (AON), [acyl-carrier protein], and carbon dioxide. The protein is 8-amino-7-oxononanoate synthase of Treponema denticola (strain ATCC 35405 / DSM 14222 / CIP 103919 / JCM 8153 / KCTC 15104).